Here is a 678-residue protein sequence, read N- to C-terminus: RAS guanyl-releasing protein 4 (678 aa).

Composition is skewed to basic residues over residues M1–S10 and G20–T32. 2 disordered regions span residues M1 to C33 and G165 to P185. An N-terminal Ras-GEF domain is found at G49–G175. The region spanning E201–R432 is the Ras-GEF domain. Residues H466–A501 form the EF-hand domain. The segment at L540–C595 adopts a Phorbol-ester/DAG-type zinc-finger fold. Disordered regions lie at residues R598–T620 and S651–V678. The segment covering P605–P619 has biased composition (pro residues).

This sequence belongs to the RASGRP family. As to expression, expressed by mast cells and their progenitors (at protein level).

Its subcellular location is the cytoplasm. The protein resides in the cell membrane. Functions as a cation- and diacylglycerol (DAG)-regulated nucleotide exchange factor activating Ras through the exchange of bound GDP for GTP. In neutrophils, participates in a phospholipase C-activating N-formyl peptide-activated GPCR (G protein-coupled receptor) signaling pathway by promoting Ras-mediated activation of PIK3CG/PI3Kgamma to promote neutrophil functional responses. In CD117(+) dendritic cells and mast cells, participates in an lipopolysaccharide (LPS)-activated signaling pathway that stimulates the production of interferon-gamma and other pro-inflammatory cytokines by natural killer (NK) cells. May function in mast cell differentiation. Does not appear to be required for the development of B-cells, DC-cells, T-cells, or NK-cells. The sequence is that of RAS guanyl-releasing protein 4 (Rasgrp4) from Rattus norvegicus (Rat).